Consider the following 457-residue polypeptide: L-lysine-epsilon aminotransferase (457 aa).

The pyridoxal 5'-phosphate site is built by Gly131 and Ala132. Residues Arg172 and Gln278 each contribute to the 2-oxoglutarate site. Arg172 serves as a coordination point for L-lysine. Gln278 is a pyridoxal 5'-phosphate binding site. At Lys304 the chain carries N6-(pyridoxal phosphate)lysine. Arg427 is a binding site for 2-oxoglutarate.

The protein belongs to the class-III pyridoxal-phosphate-dependent aminotransferase family. Monomer. Requires pyridoxal 5'-phosphate as cofactor.

The enzyme catalyses L-lysine + 2-oxoglutarate = (S)-2-amino-6-oxohexanoate + L-glutamate. It participates in antibiotic biosynthesis; cephamycin C biosynthesis. Its activity is regulated as follows. Activity is induced in the presence of high concentrations of lysine, but not by L-alpha-aminoadipic acid. Not repressed by ammonium ions. In terms of biological role, catalyzes the transfer of the terminal amino group of L-lysine to alpha-ketoglutarate to yield L-glutamate and 2-aminoadipate 6-semialdehyde ((S)-2-amino-6-oxohexanoate), which is spontaneously converted to the dehydrated form 1-piperideine 6-carboxylate. Shows a high specificity for L-lysine as substrate although L-ornithine can also be used, leading to the formation of an o-aminobenzaldehyde reactive compound. Only cis-oxaloacetate and pyruvate can replace alpha-ketoglutarate, but with very low efficiency. The sequence is that of L-lysine-epsilon aminotransferase from Streptomyces clavuligerus.